The primary structure comprises 134 residues: T-cell receptor beta chain V region CTL-F3 (134 aa).

The N-terminal stretch at 1–19 (MAPRLLFCLVLCFLRAEPT) is a signal peptide. The interval 20 to 115 (NAGVIQTPRH…SAVYLCASSL (96 aa)) is v segment. A disulfide bridge connects residues cysteine 42 and cysteine 111. The N-linked (GlcNAc...) asparagine glycan is linked to asparagine 90. The d segment stretch occupies residues 116-119 (STGV). The tract at residues 120–134 (SYEQYFGPGTRLTVL) is j segment.

This Mus musculus (Mouse) protein is T-cell receptor beta chain V region CTL-F3.